The primary structure comprises 108 residues: UPF0145 protein Tmel_1129 (108 aa).

It belongs to the UPF0145 family.

This Thermosipho melanesiensis (strain DSM 12029 / CIP 104789 / BI429) protein is UPF0145 protein Tmel_1129.